A 324-amino-acid chain; its full sequence is Protein translocase subunit SecF (324 aa).

The next 6 membrane-spanning stretches (helical) occupy residues 16 to 36, 145 to 165, 174 to 194, 201 to 221, 247 to 269, and 276 to 295; these read FFWA…ASLV, LIRS…VYIW, LGSV…FALF, TTVA…VVVF, TLSR…LVFG, and FVFA…VYMA.

Belongs to the SecD/SecF family. SecF subfamily. Forms a complex with SecD. Part of the essential Sec protein translocation apparatus which comprises SecA, SecYEG and auxiliary proteins SecDF-YajC and YidC.

The protein resides in the cell inner membrane. Functionally, part of the Sec protein translocase complex. Interacts with the SecYEG preprotein conducting channel. SecDF uses the proton motive force (PMF) to complete protein translocation after the ATP-dependent function of SecA. This chain is Protein translocase subunit SecF, found in Cereibacter sphaeroides (strain ATCC 17023 / DSM 158 / JCM 6121 / CCUG 31486 / LMG 2827 / NBRC 12203 / NCIMB 8253 / ATH 2.4.1.) (Rhodobacter sphaeroides).